The primary structure comprises 373 residues: Enoyl-[acyl-carrier-protein] reductase, mitochondrial (373 aa).

The transit peptide at 1-53 (MLVSRRLTGARARAPLLASLLEAWCRQGRTTSSYSAFSEPSHVRALVYGNHGD) directs the protein to the mitochondrion. Lys61 bears the N6-acetyllysine; alternate mark. Lys61 is modified (N6-succinyllysine; alternate). Catalysis depends on Tyr94, which acts as the Proton donor. NADP(+) is bound by residues Asn167, 193–196 (NSGV), and 216–218 (RDR). Lys252 and Lys267 each carry N6-acetyllysine; alternate. Residues Lys252 and Lys267 each carry the N6-succinyllysine; alternate modification. Residues 285–288 (YGGM) and 310–312 (FWL) contribute to the NADP(+) site. At Lys316 the chain carries N6-succinyllysine. An NADP(+)-binding site is contributed by Lys368.

Belongs to the zinc-containing alcohol dehydrogenase family. Quinone oxidoreductase subfamily. In terms of assembly, homodimer. Interacts with PPARA in the nucleus and increases its activity.

The protein localises to the mitochondrion. It is found in the cytoplasm. It localises to the nucleus. The catalysed reaction is a 2,3-saturated acyl-[ACP] + NADP(+) = a (2E)-enoyl-[ACP] + NADPH + H(+). It carries out the reaction (2E)-butenoyl-[ACP] + NADPH + H(+) = butanoyl-[ACP] + NADP(+). It catalyses the reaction (2E)-hexenoyl-[ACP] + NADPH + H(+) = hexanoyl-[ACP] + NADP(+). The enzyme catalyses (2E)-octenoyl-[ACP] + NADPH + H(+) = octanoyl-[ACP] + NADP(+). The catalysed reaction is (2E)-decenoyl-[ACP] + NADPH + H(+) = decanoyl-[ACP] + NADP(+). It carries out the reaction (2E)-dodecenoyl-[ACP] + NADPH + H(+) = dodecanoyl-[ACP] + NADP(+). It catalyses the reaction (2E)-tetradecenoyl-[ACP] + NADPH + H(+) = tetradecanoyl-[ACP] + NADP(+). The enzyme catalyses (2E)-hexadecenoyl-[ACP] + NADPH + H(+) = hexadecanoyl-[ACP] + NADP(+). In terms of biological role, catalyzes the NADPH-dependent reduction of trans-2-enoyl thioesters in mitochondrial fatty acid synthesis (fatty acid synthesis type II). Fatty acid chain elongation in mitochondria uses acyl carrier protein (ACP) as an acyl group carrier, but the enzyme accepts both ACP and CoA thioesters as substrates in vitro. Displays a preference for medium-chain over short- and long-chain substrates. May provide the octanoyl chain used for lipoic acid biosynthesis, regulating protein lipoylation and mitochondrial respiratory activity particularly in Purkinje cells. Involved in iron homeostasis; affecting Fe-S cluster assembly and ceramide metabolism. Required for proper morphology and bioenergetic functions of mitochondria. Required for maintenance of neurons. The polypeptide is Enoyl-[acyl-carrier-protein] reductase, mitochondrial (Mecr) (Rattus norvegicus (Rat)).